Consider the following 158-residue polypeptide: NAD(P)H-quinone oxidoreductase subunit J, chloroplastic (158 aa).

Belongs to the complex I 30 kDa subunit family. NDH is composed of at least 16 different subunits, 5 of which are encoded in the nucleus.

It is found in the plastid. The protein resides in the chloroplast thylakoid membrane. The catalysed reaction is a plastoquinone + NADH + (n+1) H(+)(in) = a plastoquinol + NAD(+) + n H(+)(out). It catalyses the reaction a plastoquinone + NADPH + (n+1) H(+)(in) = a plastoquinol + NADP(+) + n H(+)(out). Its function is as follows. NDH shuttles electrons from NAD(P)H:plastoquinone, via FMN and iron-sulfur (Fe-S) centers, to quinones in the photosynthetic chain and possibly in a chloroplast respiratory chain. The immediate electron acceptor for the enzyme in this species is believed to be plastoquinone. Couples the redox reaction to proton translocation, and thus conserves the redox energy in a proton gradient. This chain is NAD(P)H-quinone oxidoreductase subunit J, chloroplastic, found in Cucumis sativus (Cucumber).